Reading from the N-terminus, the 70-residue chain is ATP synthase subunit c (70 aa).

Transmembrane regions (helical) follow at residues 4-24 (IAAG…DGIV) and 47-67 (FIGV…ALMV).

This sequence belongs to the ATPase C chain family. F-type ATPases have 2 components, F(1) - the catalytic core - and F(0) - the membrane proton channel. F(1) has five subunits: alpha(3), beta(3), gamma(1), delta(1), epsilon(1). F(0) has three main subunits: a(1), b(2) and c(10-14). The alpha and beta chains form an alternating ring which encloses part of the gamma chain. F(1) is attached to F(0) by a central stalk formed by the gamma and epsilon chains, while a peripheral stalk is formed by the delta and b chains.

It is found in the cell membrane. F(1)F(0) ATP synthase produces ATP from ADP in the presence of a proton or sodium gradient. F-type ATPases consist of two structural domains, F(1) containing the extramembraneous catalytic core and F(0) containing the membrane proton channel, linked together by a central stalk and a peripheral stalk. During catalysis, ATP synthesis in the catalytic domain of F(1) is coupled via a rotary mechanism of the central stalk subunits to proton translocation. In terms of biological role, key component of the F(0) channel; it plays a direct role in translocation across the membrane. A homomeric c-ring of between 10-14 subunits forms the central stalk rotor element with the F(1) delta and epsilon subunits. This is ATP synthase subunit c from Levilactobacillus brevis (strain ATCC 367 / BCRC 12310 / CIP 105137 / JCM 1170 / LMG 11437 / NCIMB 947 / NCTC 947) (Lactobacillus brevis).